Here is a 683-residue protein sequence, read N- to C-terminus: Glucosylceramidase (683 aa).

The active-site Proton donor is the Glu254. Glu483 (nucleophile) is an active-site residue.

The protein belongs to the glycosyl hydrolase 5 (cellulase A) family.

Its subcellular location is the membrane. The enzyme catalyses a beta-D-glucosyl-(1&lt;-&gt;1')-N-acylsphing-4-enine + H2O = an N-acylsphing-4-enine + D-glucose. Its activity is regulated as follows. Inhibited by metal cations Co(2+), Cu(2+), Ni(2+), Pb(2+) and Zn(2+). Not inhibited by metal chelator ethylenediaminetetraacetic acid (EDTA). Functionally, specifically hydrolyzes the glucosidic linkage in glucosylceramide. May prevent accumulation of aberrent glucosylceramide containing immature ceramide. The protein is Glucosylceramidase of Rhizopus delemar (strain RA 99-880 / ATCC MYA-4621 / FGSC 9543 / NRRL 43880) (Mucormycosis agent).